The sequence spans 770 residues: Kinesin-like protein klpA (770 aa).

The disordered stretch occupies residues 1-152 (MENVQSRMQG…GLGKRGEWDQ (152 aa)). Residues 85–105 (SSTLTRSASAASRPRGPLSSS) show a composition bias toward low complexity. Polar residues predominate over residues 106–119 (TSGRPKTSMSTSRR). A compositionally biased stretch (basic and acidic residues) spans 134-152 (THQEERSYGGLGKRGEWDQ). Residues 175–425 (QESSGLKDAL…QELKGNIRVF (251 aa)) adopt a coiled-coil conformation. The Kinesin motor domain maps to 421–756 (NIRVFCRVRP…LKFATKVHNT (336 aa)). An ATP-binding site is contributed by 514 to 521 (GQTGSGKT).

Belongs to the TRAFAC class myosin-kinesin ATPase superfamily. Kinesin family. NCD subfamily.

It localises to the cytoplasm. The protein localises to the cytoskeleton. This Emericella nidulans (strain FGSC A4 / ATCC 38163 / CBS 112.46 / NRRL 194 / M139) (Aspergillus nidulans) protein is Kinesin-like protein klpA (klpA).